The sequence spans 113 residues: Ranasmurfin (113 aa).

Tyr-2 bears the 2',4',5'-topaquinone mark. Residues 2–31 constitute a cross-link (lysine tyrosylquinone (Tyr-Lys)); it reads YACSFPPSEIPGSKECLAEALQKHQGFKKK. Intrachain disulfides connect Cys-4/Cys-62, Cys-17/Cys-65, and Cys-37/Cys-101. Ser-9 is modified (aminomalonic acid (Ser); in chain B). Residues 17–65 constitute a cross-link (S-cysteinyl 3-(oxidosulfanyl)alanine (Cys-Cys); in chain B); that stretch reads CLAEALQKHQGFKKKSYALICAYLNYKEDAENYERAAEDFDSAVKCTGC. Positions 30–108 form a cross-link, lysine tyrosylquinone (Lys-Tyr); sequence KKSYALICAY…SLCTLFQKLY (79 aa). Position 65 is a cysteine sulfenic acid (-SOH); in chain B (Cys-65). 2',4',5'-topaquinone is present on Tyr-108. Positions 108 and 112 each coordinate Zn(2+). Residue Tyr-108 forms a 5'-tyrosyl-5'-aminotyrosine (Tyr-Tyr) (interchain with Y-108) linkage.

In terms of assembly, homodimer. The two chains, designated A and B, differ in their modifications, but not, it is thought, in their sequence. The cofactor is Zn(2+). Foam nest.

It localises to the secreted. The sequence is that of Ranasmurfin from Polypedates leucomystax (Common tree frog).